Consider the following 218-residue polypeptide: Redox-sensing transcriptional repressor Rex (218 aa).

A DNA-binding region (H-T-H motif) is located at residues 25–64 (WYLSYVQLLHADGCESVSSTRIARAVGVDASLVAKDLSYV). 99 to 104 (GVGSLG) is an NAD(+) binding site.

The protein belongs to the transcriptional regulatory Rex family. In terms of assembly, homodimer.

The protein localises to the cytoplasm. Functionally, modulates transcription in response to changes in cellular NADH/NAD(+) redox state. The polypeptide is Redox-sensing transcriptional repressor Rex (Porphyromonas gingivalis (strain ATCC BAA-308 / W83)).